Consider the following 418-residue polypeptide: 3-isopropylmalate dehydratase large subunit (418 aa).

[4Fe-4S] cluster contacts are provided by cysteine 297, cysteine 357, and cysteine 360.

It belongs to the aconitase/IPM isomerase family. LeuC type 2 subfamily. As to quaternary structure, heterodimer of LeuC and LeuD. It depends on [4Fe-4S] cluster as a cofactor.

It carries out the reaction (2R,3S)-3-isopropylmalate = (2S)-2-isopropylmalate. It functions in the pathway amino-acid biosynthesis; L-leucine biosynthesis; L-leucine from 3-methyl-2-oxobutanoate: step 2/4. Catalyzes the isomerization between 2-isopropylmalate and 3-isopropylmalate, via the formation of 2-isopropylmaleate. This Elusimicrobium minutum (strain Pei191) protein is 3-isopropylmalate dehydratase large subunit.